An 87-amino-acid polypeptide reads, in one-letter code: UPF0250 protein BUAPTUC7_482 (87 aa).

Belongs to the UPF0250 family.

This chain is UPF0250 protein BUAPTUC7_482, found in Buchnera aphidicola subsp. Acyrthosiphon pisum (strain Tuc7).